A 369-amino-acid polypeptide reads, in one-letter code: Histidinol-phosphate aminotransferase 2 (369 aa).

K227 is subject to N6-(pyridoxal phosphate)lysine.

Belongs to the class-II pyridoxal-phosphate-dependent aminotransferase family. Histidinol-phosphate aminotransferase subfamily. In terms of assembly, homodimer. Requires pyridoxal 5'-phosphate as cofactor.

It carries out the reaction L-histidinol phosphate + 2-oxoglutarate = 3-(imidazol-4-yl)-2-oxopropyl phosphate + L-glutamate. Its pathway is amino-acid biosynthesis; L-histidine biosynthesis; L-histidine from 5-phospho-alpha-D-ribose 1-diphosphate: step 7/9. This chain is Histidinol-phosphate aminotransferase 2 (hisC2), found in Mesorhizobium japonicum (strain LMG 29417 / CECT 9101 / MAFF 303099) (Mesorhizobium loti (strain MAFF 303099)).